Here is a 211-residue protein sequence, read N- to C-terminus: Glycerol-3-phosphate acyltransferase (211 aa).

The next 6 membrane-spanning stretches (helical) occupy residues 10 to 30, 63 to 83, 90 to 110, 126 to 146, 152 to 172, and 174 to 194; these read FYTWSIFLMSYLIGSIPFGLL, TLTLLCDILKGTVVVLVIKFL, SIIISLVGFFAFLGHLFPIWL, LGYYWPAAIVFIIVWIMFFIL, LSALIAVIITPIFVYFSYPHL, and AHCILVMMSIFVIIKHHANIA.

Belongs to the PlsY family. As to quaternary structure, probably interacts with PlsX.

Its subcellular location is the cell inner membrane. The catalysed reaction is an acyl phosphate + sn-glycerol 3-phosphate = a 1-acyl-sn-glycero-3-phosphate + phosphate. It participates in lipid metabolism; phospholipid metabolism. In terms of biological role, catalyzes the transfer of an acyl group from acyl-phosphate (acyl-PO(4)) to glycerol-3-phosphate (G3P) to form lysophosphatidic acid (LPA). This enzyme utilizes acyl-phosphate as fatty acyl donor, but not acyl-CoA or acyl-ACP. The polypeptide is Glycerol-3-phosphate acyltransferase (Bartonella quintana (strain Toulouse) (Rochalimaea quintana)).